The primary structure comprises 380 residues: MDFNLNDEQELFVAGIRELMASENWEAYFAECDRDSVYPERFVKALADMGIDSLLIPEEHGGLDAGFVTLAAVWMELGRLGAPTYVLYQLPGGFNTFLREGTQEQIDKIMAFRGTGKQMWNSAITEPGAGSDVGSLKTTYTRRNGKIYLNGSKCFITSSAYTPYIVVMARDGASPDKPVYTEWFVDMSKPGIKVTKLEKLGLRMDSCCEITFDDVELDEKDMFGREGNGFNSVKEEFDHERFLVALTNYGTAMCAFEDAARYANQRVQFGEAIGRFQLIQEKFAHMAIKLNSMKNMLYEAAWKADNGTITSGDAAMCKYFCANAAFEVVDSAMQVLGGVGIAGNHRISRFWRDLRVDRVSGGSDEMQILTLGRAVLKQYR.

It belongs to the acyl-CoA dehydrogenase family. Homotetramer. The cofactor is FAD.

The protein resides in the cytoplasm. The catalysed reaction is 4-(trimethylamino)butanoyl-CoA + oxidized [electron-transfer flavoprotein] + H(+) = crotonobetainyl-CoA + reduced [electron-transfer flavoprotein]. Its pathway is amine and polyamine metabolism; carnitine metabolism. Functionally, catalyzes the reduction of crotonobetainyl-CoA to gamma-butyrobetainyl-CoA. This chain is Crotonobetainyl-CoA reductase, found in Shigella flexneri serotype 5b (strain 8401).